The sequence spans 96 residues: Growth-regulated alpha protein (96 aa).

The first 24 residues, 1–24, serve as a signal peptide directing secretion; that stretch reads MIPATRSLLCAALLLLATSRLATG. 2 disulfides stabilise this stretch: C33–C59 and C35–C75.

Belongs to the intercrine alpha (chemokine CxC) family. The N-terminal processed form KC(5-72) is produced by proteolytic cleavage after secretion from bone marrow stromal cells.

The protein localises to the secreted. Its function is as follows. Has chemotactic activity for neutrophils. Contributes to neutrophil activation during inflammation. Hematoregulatory chemokine, which, in vitro, suppresses hematopoietic progenitor cell proliferation. KC(5-72) shows a highly enhanced hematopoietic activity. This chain is Growth-regulated alpha protein (Cxcl1), found in Mus musculus (Mouse).